Reading from the N-terminus, the 309-residue chain is Foldase protein PrsA (309 aa).

A signal peptide spans 1 to 22 (MKTRSKLAAGFLTLMSVATLAA). Cys-23 is lipidated: N-palmitoyl cysteine. Cys-23 is lipidated: S-diacylglycerol cysteine. Residues 146 to 241 (TPETSVQVIK…TSYYIIKVTD (96 aa)) form the PpiC domain.

It belongs to the PrsA family.

The protein localises to the cell membrane. It carries out the reaction [protein]-peptidylproline (omega=180) = [protein]-peptidylproline (omega=0). Functionally, plays a major role in protein secretion by helping the post-translocational extracellular folding of several secreted proteins. This Streptococcus agalactiae serotype V (strain ATCC BAA-611 / 2603 V/R) protein is Foldase protein PrsA.